We begin with the raw amino-acid sequence, 285 residues long: MIIGCSASQKLAASVADLLDEPLCPVETRKFPDGERYIRVKEEVEGEVTVVQSTGYPQDENLMELLFMIENLKDLGADYVRAAIPYFGYGRQERRFKSGEAVSAKIVAHLLEAAGADEIVTVNLHENCLSEFFRVPVRELSAMPLIAEHISFLDDPVIIAPDKGALGHAREVSDILGCECDYMEKVRISPEVVETRVSDLDVEGKDAVVVDDIISTGGTIVNAAGILGKCGASSITVCCVHPVLVEDALLKIFSAGVERVIATDTLKSDVSEISVAPLIADVMKD.

Residues 33–35 and 91–92 contribute to the ATP site; these read DGE and RQ. Mg(2+)-binding residues include His-125 and Asp-162. Lys-185 is an active-site residue. D-ribose 5-phosphate is bound by residues Arg-187, Asp-211, and 215–219; that span reads STGGT.

The protein belongs to the ribose-phosphate pyrophosphokinase family. Class III (archaeal) subfamily. Requires Mg(2+) as cofactor.

The protein resides in the cytoplasm. It catalyses the reaction D-ribose 5-phosphate + ATP = 5-phospho-alpha-D-ribose 1-diphosphate + AMP + H(+). The protein operates within metabolic intermediate biosynthesis; 5-phospho-alpha-D-ribose 1-diphosphate biosynthesis; 5-phospho-alpha-D-ribose 1-diphosphate from D-ribose 5-phosphate (route I): step 1/1. Its function is as follows. Involved in the biosynthesis of the central metabolite phospho-alpha-D-ribosyl-1-pyrophosphate (PRPP) via the transfer of pyrophosphoryl group from ATP to 1-hydroxyl of ribose-5-phosphate (Rib-5-P). The sequence is that of Ribose-phosphate pyrophosphokinase from Methanothermobacter thermautotrophicus (strain ATCC 29096 / DSM 1053 / JCM 10044 / NBRC 100330 / Delta H) (Methanobacterium thermoautotrophicum).